The primary structure comprises 201 residues: Imidazole glycerol phosphate synthase subunit HisH (201 aa).

A Glutamine amidotransferase type-1 domain is found at 1–201; it reads MVFIADYGAG…LQVLRNFAEC (201 aa). Catalysis depends on cysteine 79, which acts as the Nucleophile. Active-site residues include histidine 183 and glutamate 185.

In terms of assembly, heterodimer of HisH and HisF.

The protein localises to the cytoplasm. The enzyme catalyses 5-[(5-phospho-1-deoxy-D-ribulos-1-ylimino)methylamino]-1-(5-phospho-beta-D-ribosyl)imidazole-4-carboxamide + L-glutamine = D-erythro-1-(imidazol-4-yl)glycerol 3-phosphate + 5-amino-1-(5-phospho-beta-D-ribosyl)imidazole-4-carboxamide + L-glutamate + H(+). It catalyses the reaction L-glutamine + H2O = L-glutamate + NH4(+). Its pathway is amino-acid biosynthesis; L-histidine biosynthesis; L-histidine from 5-phospho-alpha-D-ribose 1-diphosphate: step 5/9. Its function is as follows. IGPS catalyzes the conversion of PRFAR and glutamine to IGP, AICAR and glutamate. The HisH subunit catalyzes the hydrolysis of glutamine to glutamate and ammonia as part of the synthesis of IGP and AICAR. The resulting ammonia molecule is channeled to the active site of HisF. The polypeptide is Imidazole glycerol phosphate synthase subunit HisH (Chlorobium luteolum (strain DSM 273 / BCRC 81028 / 2530) (Pelodictyon luteolum)).